The sequence spans 171 residues: UPF0398 protein STER_0279 (171 aa).

The protein belongs to the UPF0398 family.

In Streptococcus thermophilus (strain ATCC BAA-491 / LMD-9), this protein is UPF0398 protein STER_0279.